A 257-amino-acid chain; its full sequence is Type III pantothenate kinase (257 aa).

6–13 lines the ATP pocket; the sequence is DVGNTSTK. 109–112 provides a ligand contact to substrate; sequence GADR. Aspartate 111 functions as the Proton acceptor in the catalytic mechanism. Aspartate 132 serves as a coordination point for K(+). Threonine 135 lines the ATP pocket. Position 187 (threonine 187) interacts with substrate.

It belongs to the type III pantothenate kinase family. In terms of assembly, homodimer. It depends on NH4(+) as a cofactor. Requires K(+) as cofactor.

The protein localises to the cytoplasm. The enzyme catalyses (R)-pantothenate + ATP = (R)-4'-phosphopantothenate + ADP + H(+). The protein operates within cofactor biosynthesis; coenzyme A biosynthesis; CoA from (R)-pantothenate: step 1/5. Functionally, catalyzes the phosphorylation of pantothenate (Pan), the first step in CoA biosynthesis. This Anaplasma marginale (strain Florida) protein is Type III pantothenate kinase.